Consider the following 22-residue polypeptide: Caerin-3.2 (22 aa).

Lys22 is modified (lysine amide).

In terms of tissue distribution, expressed by the skin parotoid and/or rostral glands.

The protein resides in the secreted. In terms of biological role, antibacterial peptide, that adopts an alpha helical conformation which can disrupt bacterial membranes. Each caerin displays a different antimicrobial specificity. This is Caerin-3.2 from Ranoidea caerulea (Green tree frog).